We begin with the raw amino-acid sequence, 108 residues long: Large ribosomal subunit protein bL21 (108 aa).

This sequence belongs to the bacterial ribosomal protein bL21 family. As to quaternary structure, part of the 50S ribosomal subunit. Contacts protein L20.

Functionally, this protein binds to 23S rRNA in the presence of protein L20. This Orientia tsutsugamushi (strain Ikeda) (Rickettsia tsutsugamushi) protein is Large ribosomal subunit protein bL21.